We begin with the raw amino-acid sequence, 494 residues long: Aspartyl/glutamyl-tRNA(Asn/Gln) amidotransferase subunit B (494 aa).

The protein belongs to the GatB/GatE family. GatB subfamily. As to quaternary structure, heterotrimer of A, B and C subunits.

The catalysed reaction is L-glutamyl-tRNA(Gln) + L-glutamine + ATP + H2O = L-glutaminyl-tRNA(Gln) + L-glutamate + ADP + phosphate + H(+). It catalyses the reaction L-aspartyl-tRNA(Asn) + L-glutamine + ATP + H2O = L-asparaginyl-tRNA(Asn) + L-glutamate + ADP + phosphate + 2 H(+). In terms of biological role, allows the formation of correctly charged Asn-tRNA(Asn) or Gln-tRNA(Gln) through the transamidation of misacylated Asp-tRNA(Asn) or Glu-tRNA(Gln) in organisms which lack either or both of asparaginyl-tRNA or glutaminyl-tRNA synthetases. The reaction takes place in the presence of glutamine and ATP through an activated phospho-Asp-tRNA(Asn) or phospho-Glu-tRNA(Gln). This Synechococcus elongatus (strain ATCC 33912 / PCC 7942 / FACHB-805) (Anacystis nidulans R2) protein is Aspartyl/glutamyl-tRNA(Asn/Gln) amidotransferase subunit B.